We begin with the raw amino-acid sequence, 362 residues long: Peptide chain release factor 1 (362 aa).

Position 235 is an N5-methylglutamine (Q235).

Belongs to the prokaryotic/mitochondrial release factor family. In terms of processing, methylated by PrmC. Methylation increases the termination efficiency of RF1.

The protein localises to the cytoplasm. Functionally, peptide chain release factor 1 directs the termination of translation in response to the peptide chain termination codons UAG and UAA. The sequence is that of Peptide chain release factor 1 from Acinetobacter baylyi (strain ATCC 33305 / BD413 / ADP1).